The primary structure comprises 188 residues: Peptidyl-tRNA hydrolase (188 aa).

TRNA is bound at residue Y15. Catalysis depends on H20, which acts as the Proton acceptor. F66, N68, and N114 together coordinate tRNA.

Belongs to the PTH family. As to quaternary structure, monomer.

It is found in the cytoplasm. It carries out the reaction an N-acyl-L-alpha-aminoacyl-tRNA + H2O = an N-acyl-L-amino acid + a tRNA + H(+). Functionally, hydrolyzes ribosome-free peptidyl-tRNAs (with 1 or more amino acids incorporated), which drop off the ribosome during protein synthesis, or as a result of ribosome stalling. Catalyzes the release of premature peptidyl moieties from peptidyl-tRNA molecules trapped in stalled 50S ribosomal subunits, and thus maintains levels of free tRNAs and 50S ribosomes. This chain is Peptidyl-tRNA hydrolase, found in Lactococcus lactis subsp. cremoris (strain MG1363).